The following is a 445-amino-acid chain: MKEKVIVIGGGLAGSEAAWRLANEGHRVILYEMRPKKMTPAHKTGNLAELVCSNTLGGLELTTGAGLLKAEMQKLGSLVIEAAKVARVPAGGALGVDRKIFSEYITEKIESHPNITLIREEVKEIPEDEVVVIATGPLTSDALSEKIKELVGYDTLYFYDAIAPIVEAESVDFSKGFWGSRYGKGGDDYFNCVLTEEEYKKFYEELLKAEKVKPKDFEKAVHFEGCLPIEEMAERGYKTLLFGPMKPVGLVDPRTGKEPFAVVQLRKENKEGTLLSLVGFQTKLTYKEQKRVFRLIPCLRNAVFVRLGSMHRNTFIQSNKVLTHYLNLKKKENIFFAGQITGVEGYVASSATGILAGINAGRLARGEKPLKAPTETMLGALVNYIVTKEGELQPMNPVFGLLPPLEKKVRDKKKRKELMAKRALETMEKWIKENNLVPEGLVKVC.

Gly-9–Gly-14 serves as a coordination point for FAD.

The protein belongs to the MnmG family. TrmFO subfamily. It depends on FAD as a cofactor.

It localises to the cytoplasm. It carries out the reaction uridine(54) in tRNA + (6R)-5,10-methylene-5,6,7,8-tetrahydrofolate + NADH + H(+) = 5-methyluridine(54) in tRNA + (6S)-5,6,7,8-tetrahydrofolate + NAD(+). The catalysed reaction is uridine(54) in tRNA + (6R)-5,10-methylene-5,6,7,8-tetrahydrofolate + NADPH + H(+) = 5-methyluridine(54) in tRNA + (6S)-5,6,7,8-tetrahydrofolate + NADP(+). Catalyzes the folate-dependent formation of 5-methyl-uridine at position 54 (M-5-U54) in all tRNAs. The sequence is that of Methylenetetrahydrofolate--tRNA-(uracil-5-)-methyltransferase TrmFO from Aquifex aeolicus (strain VF5).